The chain runs to 151 residues: Aspartate carbamoyltransferase regulatory chain (151 aa).

Zn(2+) is bound by residues Cys108, Cys113, Cys138, and Cys141.

Belongs to the PyrI family. In terms of assembly, contains catalytic and regulatory chains. It depends on Zn(2+) as a cofactor.

Involved in allosteric regulation of aspartate carbamoyltransferase. This Pyrobaculum neutrophilum (strain DSM 2338 / JCM 9278 / NBRC 100436 / V24Sta) (Thermoproteus neutrophilus) protein is Aspartate carbamoyltransferase regulatory chain.